The following is a 69-amino-acid chain: Putative membrane protein insertion efficiency factor (69 aa).

Belongs to the UPF0161 family.

The protein resides in the cell membrane. Its function is as follows. Could be involved in insertion of integral membrane proteins into the membrane. The sequence is that of Putative membrane protein insertion efficiency factor from Alkaliphilus metalliredigens (strain QYMF).